The sequence spans 129 residues: Large-conductance mechanosensitive channel (129 aa).

Transmembrane regions (helical) follow at residues 10 to 30 (FAVKGNVVDMAVGVIIGGAFG) and 76 to 96 (GAFIQNVFDFLIIAIAVFGMV).

The protein belongs to the MscL family. As to quaternary structure, homopentamer.

The protein localises to the cell inner membrane. Its function is as follows. Channel that opens in response to stretch forces in the membrane lipid bilayer. May participate in the regulation of osmotic pressure changes within the cell. The polypeptide is Large-conductance mechanosensitive channel (Actinobacillus pleuropneumoniae serotype 5b (strain L20)).